The primary structure comprises 180 residues: ATP-dependent protease subunit HslV (180 aa).

Residue threonine 8 is part of the active site. Residues glycine 165, aspartate 168, and threonine 171 each contribute to the Na(+) site.

It belongs to the peptidase T1B family. HslV subfamily. In terms of assembly, a double ring-shaped homohexamer of HslV is capped on each side by a ring-shaped HslU homohexamer. The assembly of the HslU/HslV complex is dependent on binding of ATP.

It localises to the cytoplasm. It carries out the reaction ATP-dependent cleavage of peptide bonds with broad specificity.. With respect to regulation, allosterically activated by HslU binding. Its function is as follows. Protease subunit of a proteasome-like degradation complex believed to be a general protein degrading machinery. The protein is ATP-dependent protease subunit HslV of Lactiplantibacillus plantarum (strain ATCC BAA-793 / NCIMB 8826 / WCFS1) (Lactobacillus plantarum).